Here is a 63-residue protein sequence, read N- to C-terminus: MKFVEIKDLSVAELKKKRAALSEELFQARIKNSIGQLSNPVQIRGLRRDIAKINTAIVKKVAR.

It belongs to the universal ribosomal protein uL29 family.

The polypeptide is Large ribosomal subunit protein uL29 (Bdellovibrio bacteriovorus (strain ATCC 15356 / DSM 50701 / NCIMB 9529 / HD100)).